The sequence spans 334 residues: Gap junction alpha-2 protein (334 aa).

The Cytoplasmic segment spans residues 1–12; that stretch reads MAGWELLKLLLD. The helical transmembrane segment at 13–35 threads the bilayer; the sequence is DVQEHSTLIGKVWLTVLFIFRIF. At 36–75 the chain is on the extracellular side; sequence ILSVAGESVWTDEQSDFICNTQQPGCTNVCYDQAFPISHV. A helical membrane pass occupies residues 76–98; that stretch reads RYWVLQFLFVSTPTLIYLGHMVY. The Cytoplasmic portion of the chain corresponds to 99-153; it reads LSKKEEKERQKENESRILVANEAQTEVHSSATKKIRIQGPLMCTYTTSVVFKSIF. A helical membrane pass occupies residues 154–176; that stretch reads EAGFLLGQWYIYGFVMSPIFVCE. The Extracellular portion of the chain corresponds to 177 to 207; it reads RIPCKHKVECFVSRPMEKTIFIIFMLVVSLI. A helical transmembrane segment spans residues 208-230; sequence SLLLNLMELIHLSFKCFQHGIKE. Topologically, residues 231-334 are cytoplasmic; it reads GATCSPTGIP…HQTSSKQQYV (104 aa).

This sequence belongs to the connexin family. Alpha-type (group II) subfamily. A connexon is composed of a hexamer of connexins. As to expression, resides primarily in the ovary, oocytes and early embryos.

The protein resides in the cell membrane. Its subcellular location is the cell junction. The protein localises to the gap junction. One gap junction consists of a cluster of closely packed pairs of transmembrane channels, the connexons, through which materials of low MW diffuse from one cell to a neighboring cell. This Xenopus laevis (African clawed frog) protein is Gap junction alpha-2 protein (gja2).